A 615-amino-acid polypeptide reads, in one-letter code: Proteasome-associated ATPase (615 aa).

Residues 1 to 36 (MSESERPEAGDGTDALGASPDTPLSSEDAAELEQLR) form a disordered region. Positions 25-102 (SSEDAAELEQ…LREEVDRLGQ (78 aa)) form a coiled coil. 302–307 (GCGKTL) contributes to the ATP binding site. The segment at 614 to 615 (YL) is docks into pockets in the proteasome alpha-ring.

Belongs to the AAA ATPase family. As to quaternary structure, homohexamer. Assembles into a hexameric ring structure that caps the 20S proteasome core. Strongly interacts with the prokaryotic ubiquitin-like protein Pup through a hydrophobic interface; the interacting region of ARC lies in its N-terminal coiled-coil domain. There is one Pup binding site per ARC hexamer ring. Upon ATP-binding, the C-terminus of ARC interacts with the alpha-rings of the proteasome core, possibly by binding to the intersubunit pockets.

The protein operates within protein degradation; proteasomal Pup-dependent pathway. ATPase which is responsible for recognizing, binding, unfolding and translocation of pupylated proteins into the bacterial 20S proteasome core particle. May be essential for opening the gate of the 20S proteasome via an interaction with its C-terminus, thereby allowing substrate entry and access to the site of proteolysis. Thus, the C-termini of the proteasomal ATPase may function like a 'key in a lock' to induce gate opening and therefore regulate proteolysis. This chain is Proteasome-associated ATPase, found in Mycolicibacterium gilvum (strain PYR-GCK) (Mycobacterium gilvum (strain PYR-GCK)).